The chain runs to 2145 residues: U5 small nuclear ribonucleoprotein 200 kDa helicase (2145 aa).

Disordered regions lie at residues 54-82 and 202-243; these read GDRAIKGKAPVQDQKKKRKKKDDEKAQQF and DSDE…GDGH. The segment covering 220 to 231 has biased composition (acidic residues); the sequence is SEEESEEEEGVD. Residues 484-667 enclose the Helicase ATP-binding 1 domain; that stretch reads DSALRSKEHL…FLRVKPEHLH (184 aa). An ATP-binding site is contributed by 497 to 504; the sequence is APTGAGKT. A DEAH box motif is present at residues 609-612; the sequence is DEIH. One can recognise a Helicase C-terminal domain in the interval 677-894; sequence PLEQQYIGVT…QMVSRLTDML (218 aa). The SEC63 1 domain maps to 975-1278; it reads TELGRIASHF…IGAETVLPIS (304 aa). In terms of domain architecture, Helicase ATP-binding 2 spans 1331–1506; it reads RTVFESNENV…WLGCSASATF (176 aa). 1344 to 1351 serves as a coordination point for ATP; that stretch reads APNGSGKT. Residues 1448-1451 carry the DEAH box motif; sequence DDLH. Residues 1812–2124 form the SEC63 2 domain; sequence LNLGMIASYY…YLGADQEFDV (313 aa).

The protein belongs to the helicase family. SKI2 subfamily.

It localises to the nucleus. It catalyses the reaction ATP + H2O = ADP + phosphate + H(+). Functionally, catalyzes the ATP-dependent unwinding of U4/U6 RNA duplices, an essential step in the assembly of a catalytically active spliceosome. Plays a role in pre-mRNA splicing. This chain is U5 small nuclear ribonucleoprotein 200 kDa helicase, found in Caenorhabditis elegans.